A 485-amino-acid polypeptide reads, in one-letter code: ETS translocation variant 4 (485 aa).

Lys6 participates in a covalent cross-link: Glycyl lysine isopeptide (Lys-Gly) (interchain with G-Cter in SUMO2). 2 disordered regions span residues 79–114 (PDFH…RKPP) and 135–214 (IAIK…QHQL). Residue Lys95 forms a Glycyl lysine isopeptide (Lys-Gly) (interchain with G-Cter in SUMO) linkage. Ser100 is modified (phosphoserine). Lys138 is covalently cross-linked (Glycyl lysine isopeptide (Lys-Gly) (interchain with G-Cter in SUMO2)). Phosphoserine is present on residues Ser139 and Ser148. The span at 158-171 (QQQSLLRASSSSQS) shows a compositional bias: low complexity. Position 215 is a phosphoserine (Ser215). Glycyl lysine isopeptide (Lys-Gly) (interchain with G-Cter in SUMO) cross-links involve residues Lys227 and Lys261. Lys323 participates in a covalent cross-link: Glycyl lysine isopeptide (Lys-Gly) (interchain with G-Cter in SUMO2). The segment at residues 342–422 (LQLWQFLVAL…AGERYVYKFV (81 aa)) is a DNA-binding region (ETS).

This sequence belongs to the ETS family. In terms of processing, sumoylated; enhanced upon ERK/MAP kinase pathway activation it positively regulates the transcriptional activator capacity. Sumoylation at Lys-95 probably requires phosphorylation at Ser-100. Transiently polysumoylated and desumoylated by SENP1. Sumoylation is a prerequisite to polyubiquitination which in turn increases proteasomal-mediated degradation. Probably polyubiquitinated by RNF4 and deubiquitinated by USP2. As to expression, epididymis and brain.

The protein localises to the nucleus. In terms of biological role, transcriptional activator. May play a role in keratinocyte differentiation. This Mus musculus (Mouse) protein is ETS translocation variant 4 (Etv4).